Here is a 522-residue protein sequence, read N- to C-terminus: Glutamate--cysteine ligase (522 aa).

Belongs to the glutamate--cysteine ligase type 1 family. Type 1 subfamily.

The catalysed reaction is L-cysteine + L-glutamate + ATP = gamma-L-glutamyl-L-cysteine + ADP + phosphate + H(+). The protein operates within sulfur metabolism; glutathione biosynthesis; glutathione from L-cysteine and L-glutamate: step 1/2. The sequence is that of Glutamate--cysteine ligase from Shewanella halifaxensis (strain HAW-EB4).